We begin with the raw amino-acid sequence, 459 residues long: UDP-N-acetylmuramoylalanine--D-glutamate ligase (459 aa).

119–125 is a binding site for ATP; it reads GTNGKTT.

It belongs to the MurCDEF family.

The protein localises to the cytoplasm. The catalysed reaction is UDP-N-acetyl-alpha-D-muramoyl-L-alanine + D-glutamate + ATP = UDP-N-acetyl-alpha-D-muramoyl-L-alanyl-D-glutamate + ADP + phosphate + H(+). The protein operates within cell wall biogenesis; peptidoglycan biosynthesis. In terms of biological role, cell wall formation. Catalyzes the addition of glutamate to the nucleotide precursor UDP-N-acetylmuramoyl-L-alanine (UMA). This chain is UDP-N-acetylmuramoylalanine--D-glutamate ligase, found in Lactiplantibacillus plantarum (strain ATCC BAA-793 / NCIMB 8826 / WCFS1) (Lactobacillus plantarum).